We begin with the raw amino-acid sequence, 290 residues long: Ribosomal protein L11 methyltransferase (290 aa).

4 residues coordinate S-adenosyl-L-methionine: threonine 136, glycine 157, aspartate 179, and asparagine 222.

It belongs to the methyltransferase superfamily. PrmA family.

The protein resides in the cytoplasm. It catalyses the reaction L-lysyl-[protein] + 3 S-adenosyl-L-methionine = N(6),N(6),N(6)-trimethyl-L-lysyl-[protein] + 3 S-adenosyl-L-homocysteine + 3 H(+). Functionally, methylates ribosomal protein L11. This chain is Ribosomal protein L11 methyltransferase, found in Porphyromonas gingivalis (strain ATCC BAA-308 / W83).